We begin with the raw amino-acid sequence, 349 residues long: Protein-glutamate methylesterase/protein-glutamine glutaminase (349 aa).

The Response regulatory domain occupies 5-122 (RVLSVDDSAL…REGMLAYSEM (118 aa)). Position 56 is a 4-aspartylphosphate (Asp-56). A CheB-type methylesterase domain is found at 152–344 (LLSSEKLIAI…QQMLAKISAG (193 aa)). Catalysis depends on residues Ser-164, His-190, and Asp-286.

It belongs to the CheB family. In terms of processing, phosphorylated by CheA. Phosphorylation of the N-terminal regulatory domain activates the methylesterase activity.

It localises to the cytoplasm. It catalyses the reaction [protein]-L-glutamate 5-O-methyl ester + H2O = L-glutamyl-[protein] + methanol + H(+). It carries out the reaction L-glutaminyl-[protein] + H2O = L-glutamyl-[protein] + NH4(+). In terms of biological role, involved in chemotaxis. Part of a chemotaxis signal transduction system that modulates chemotaxis in response to various stimuli. Catalyzes the demethylation of specific methylglutamate residues introduced into the chemoreceptors (methyl-accepting chemotaxis proteins or MCP) by CheR. Also mediates the irreversible deamidation of specific glutamine residues to glutamic acid. This is Protein-glutamate methylesterase/protein-glutamine glutaminase from Escherichia coli O6:K15:H31 (strain 536 / UPEC).